Here is a 194-residue protein sequence, read N- to C-terminus: Adenylate kinase (194 aa).

Residue 10 to 15 (GAGKGT) participates in ATP binding. An NMP region spans residues 30–59 (STGDMLRAAVAQQSEIGKRAKAVMDAGQLV). AMP contacts are provided by residues Thr-31, Arg-36, 57-59 (QLV), 85-88 (GYPR), and Gln-92. An LID region spans residues 126–142 (SRVAETIAKGGQVRSDD). Residue Arg-127 participates in ATP binding. AMP contacts are provided by Arg-139 and Arg-150. Ala-178 contacts ATP.

Belongs to the adenylate kinase family. Monomer.

It localises to the cytoplasm. It carries out the reaction AMP + ATP = 2 ADP. It participates in purine metabolism; AMP biosynthesis via salvage pathway; AMP from ADP: step 1/1. Catalyzes the reversible transfer of the terminal phosphate group between ATP and AMP. Plays an important role in cellular energy homeostasis and in adenine nucleotide metabolism. The sequence is that of Adenylate kinase from Brucella anthropi (strain ATCC 49188 / DSM 6882 / CCUG 24695 / JCM 21032 / LMG 3331 / NBRC 15819 / NCTC 12168 / Alc 37) (Ochrobactrum anthropi).